The sequence spans 296 residues: Probable AP endonuclease (296 aa).

Cysteines 16 and 20 form a disulfide. Positions 78, 115, 142, 182, 218, 231, 233, and 271 each coordinate Zn(2+).

This sequence belongs to the AP endonuclease 2 family. Zn(2+) serves as cofactor.

It is found in the host nucleus. Its subcellular location is the host cytoplasm. The protein localises to the virion. Endonuclease of the viral base excision repair system that catalyzes DNA cleavage reaction at the apurinic or apyrimidinic sites (AP sites). Cleaves phosphodiester bonds on the 5' side of AP sites. In addition to endonuclease activity, the AP endonuclease has a proofreading 3'-5' exonuclease activity that is considerably more efficient in the elimination of a mismatch than in that of a correctly paired base. Displays 3'-phosphatase and 3'-repair diesterase activities. The single nucleotide gaps generated by the AP endonuclease are filled by the viral repair DNA polymerase X and the DNA ligase. The polypeptide is Probable AP endonuclease (Ornithodoros (relapsing fever ticks)).